The following is a 160-amino-acid chain: Ribosomal RNA large subunit methyltransferase H (160 aa).

S-adenosyl-L-methionine is bound by residues L77, G109, and 128–133 (FSRMTF).

This sequence belongs to the RNA methyltransferase RlmH family. As to quaternary structure, homodimer.

The protein resides in the cytoplasm. It carries out the reaction pseudouridine(1915) in 23S rRNA + S-adenosyl-L-methionine = N(3)-methylpseudouridine(1915) in 23S rRNA + S-adenosyl-L-homocysteine + H(+). In terms of biological role, specifically methylates the pseudouridine at position 1915 (m3Psi1915) in 23S rRNA. The chain is Ribosomal RNA large subunit methyltransferase H from Pelotomaculum thermopropionicum (strain DSM 13744 / JCM 10971 / SI).